Reading from the N-terminus, the 224-residue chain is Rhodanese-like domain-containing protein 14, chloroplastic (224 aa).

Residues 1 to 48 (MASLTSIATPYPSSSQALRLKSSGNTLFSAGVRSAAMVSGHKTLKIQC) constitute a chloroplast transit peptide. A Rhodanese domain is found at 87 to 220 (KENNFVILDV…WGKEGLPVET (134 aa)). Catalysis depends on cysteine 166, which acts as the Cysteine persulfide intermediate.

The protein resides in the plastid. It localises to the chloroplast. The polypeptide is Rhodanese-like domain-containing protein 14, chloroplastic (Arabidopsis thaliana (Mouse-ear cress)).